Consider the following 366-residue polypeptide: DNA-directed RNA polymerase subunit alpha (366 aa).

Residues 1-233 (MVREKVRVST…DLFLPFLHAE (233 aa)) are alpha N-terminal domain (alpha-NTD). The segment at 264–366 (KNEIALKSIF…KDEMGFESLE (103 aa)) is alpha C-terminal domain (alpha-CTD).

It belongs to the RNA polymerase alpha chain family. In terms of assembly, in plastids the minimal PEP RNA polymerase catalytic core is composed of four subunits: alpha, beta, beta', and beta''. When a (nuclear-encoded) sigma factor is associated with the core the holoenzyme is formed, which can initiate transcription.

It is found in the plastid. Its subcellular location is the chloroplast. It catalyses the reaction RNA(n) + a ribonucleoside 5'-triphosphate = RNA(n+1) + diphosphate. In terms of biological role, DNA-dependent RNA polymerase catalyzes the transcription of DNA into RNA using the four ribonucleoside triphosphates as substrates. This Oenothera elata subsp. hookeri (Hooker's evening primrose) protein is DNA-directed RNA polymerase subunit alpha.